Here is a 232-residue protein sequence, read N- to C-terminus: Pirin-like protein CC_1473 (232 aa).

Belongs to the pirin family.

The sequence is that of Pirin-like protein CC_1473 from Caulobacter vibrioides (strain ATCC 19089 / CIP 103742 / CB 15) (Caulobacter crescentus).